Consider the following 450-residue polypeptide: Tubulin alpha-3C chain (450 aa).

The MREC motif signature appears at 1–4 (MREC). Gln11 lines the GTP pocket. N6-acetyllysine is present on Lys40. GTP-binding residues include Glu71, Ser140, Gly144, Thr145, Thr179, Asn206, and Asn228. Glu71 serves as a coordination point for Mg(2+). Glu254 is an active-site residue. Tyr282 carries the 3'-nitrotyrosine modification. Ser439 carries the phosphoserine modification. Tyr450 carries the 3'-nitrotyrosine modification.

It belongs to the tubulin family. Dimer of alpha and beta chains. A typical microtubule is a hollow water-filled tube with an outer diameter of 25 nm and an inner diameter of 15 nM. Alpha-beta heterodimers associate head-to-tail to form protofilaments running lengthwise along the microtubule wall with the beta-tubulin subunit facing the microtubule plus end conferring a structural polarity. Microtubules usually have 13 protofilaments but different protofilament numbers can be found in some organisms and specialized cells. Mg(2+) serves as cofactor. In terms of processing, some glutamate residues at the C-terminus are polyglutamylated, resulting in polyglutamate chains on the gamma-carboxyl group. Polyglutamylation plays a key role in microtubule severing by spastin (SPAST). SPAST preferentially recognizes and acts on microtubules decorated with short polyglutamate tails: severing activity by SPAST increases as the number of glutamates per tubulin rises from one to eight, but decreases beyond this glutamylation threshold. Glutamylation is also involved in cilia motility. Post-translationally, some glutamate residues at the C-terminus are monoglycylated but not polyglycylated due to the absence of functional TTLL10 in human. Monoglycylation is mainly limited to tubulin incorporated into cilia and flagella axonemes, which is required for their stability and maintenance. Flagella glycylation controls sperm motility. Both polyglutamylation and monoglycylation can coexist on the same protein on adjacent residues, and lowering glycylation levels increases polyglutamylation, and reciprocally. Acetylation of alpha chains at Lys-40 is located inside the microtubule lumen. This modification has been correlated with increased microtubule stability, intracellular transport and ciliary assembly. In terms of processing, methylation of alpha chains at Lys-40 is found in mitotic microtubules and is required for normal mitosis and cytokinesis contributing to genomic stability. Post-translationally, nitration of Tyr-450 is irreversible and interferes with normal dynein intracellular distribution. Undergoes a tyrosination/detyrosination cycle, the cyclic removal and re-addition of a C-terminal tyrosine residue by the enzymes tubulin tyrosine carboxypeptidase (MATCAP1/KIAA0895L, VASH1 or VASH2) and tubulin tyrosine ligase (TTL), respectively. In terms of processing, tyrosination promotes microtubule interaction with CAP-Gly domain-containing proteins such as CLIP1, CLIP2 and DCTN1. Tyrosination regulates the initiation of dynein-dynactin motility via interaction with DCTN1, which brings the dynein-dynactin complex into contact with microtubules. In neurons, tyrosinated tubulins mediate the initiation of retrograde vesicle transport. Post-translationally, detyrosination is involved in metaphase plate congression by guiding chromosomes during mitosis: detyrosination promotes interaction with CENPE, promoting pole-proximal transport of chromosomes toward the equator. Detyrosination increases microtubules-dependent mechanotransduction in dystrophic cardiac and skeletal muscle. In cardiomyocytes, detyrosinated microtubules are required to resist to contractile compression during contraction: detyrosination promotes association with desmin (DES) at force-generating sarcomeres, leading to buckled microtubules and mechanical resistance to contraction. In terms of tissue distribution, expressed in testis.

Its subcellular location is the cytoplasm. The protein resides in the cytoskeleton. It carries out the reaction GTP + H2O = GDP + phosphate + H(+). In terms of biological role, tubulin is the major constituent of microtubules, a cylinder consisting of laterally associated linear protofilaments composed of alpha- and beta-tubulin heterodimers. Microtubules grow by the addition of GTP-tubulin dimers to the microtubule end, where a stabilizing cap forms. Below the cap, tubulin dimers are in GDP-bound state, owing to GTPase activity of alpha-tubulin. The sequence is that of Tubulin alpha-3C chain (TUBA3C) from Homo sapiens (Human).